Here is a 1068-residue protein sequence, read N- to C-terminus: WD repeat-containing protein on Y chromosome (1068 aa).

WD repeat units follow at residues 155–199 (DEVT…IRTA), 201–242 (SESI…RGPF), 322–361 (RIPLGVSTFFVAESHNIVVTGGPDTFVRIWDVYIPTEPSA), 365–404 (GHNGGIVLVFVQPEENKVYSVDYQKIIKVWDLHEHTLLQT), 455–494 (THAAPVSVVLYNRLFRNVVSCGLDSYIIVWDPWTGRRKII), 507–546 (IIDIEITAACFDPLEQFLLTGARDGSLKIWNYNNAVVVRN), and 594–634 (FHTD…RRYS). The interval 657–687 (SKRLASRPTPGNHGLQMGRAGRSTVLNRPED) is disordered. WD repeat units lie at residues 746-785 (KTGDCVLTMCTDRKNRYLYTGTAFGYIKVWHIENFCVPET) and 829-868 (GHLKAINSISFINLPKIIFTGSHDYSCRLWTQGGRYLGTL). The segment at 1026 to 1068 (SAINIKQPSRRRSDKTNDTRNVRTPRARDLIALEMSSSHASQS) is disordered. Residues 1039–1056 (DKTNDTRNVRTPRARDLI) are compositionally biased toward basic and acidic residues.

In Drosophila yakuba (Fruit fly), this protein is WD repeat-containing protein on Y chromosome.